Reading from the N-terminus, the 134-residue chain is Protein NrdI (134 aa).

The protein belongs to the NrdI family.

Functionally, probably involved in ribonucleotide reductase function. The polypeptide is Protein NrdI (Yersinia enterocolitica serotype O:8 / biotype 1B (strain NCTC 13174 / 8081)).